A 383-amino-acid polypeptide reads, in one-letter code: L-lactate dehydrogenase (383 aa).

The 380-residue stretch at 1 to 380 (MIISSGNDYR…NTDCLVQAIK (380 aa)) folds into the FMN hydroxy acid dehydrogenase domain. Tyr24 contacts substrate. The FMN site is built by Ser106 and Gln127. A substrate-binding site is contributed by Tyr129. Residue Thr155 coordinates FMN. A substrate-binding site is contributed by Arg164. An FMN-binding site is contributed by Lys251. The active-site Proton acceptor is the His275. Arg278 is a substrate binding site. Position 306 to 330 (306 to 330 (DSGIRNGLDVVRMLALGADTVLLGR)) interacts with FMN.

It belongs to the FMN-dependent alpha-hydroxy acid dehydrogenase family. Requires FMN as cofactor.

It is found in the cell inner membrane. It carries out the reaction (S)-lactate + A = pyruvate + AH2. In terms of biological role, catalyzes the conversion of L-lactate to pyruvate. Is coupled to the respiratory chain. The protein is L-lactate dehydrogenase of Acinetobacter baumannii (strain SDF).